A 300-amino-acid polypeptide reads, in one-letter code: 7-methylguanosine phosphate-specific 5'-nucleotidase (300 aa).

The active-site Nucleophile is the Asp41. Residues Asp41 and Asp43 each coordinate Mg(2+). The active-site Proton donor is Asp43. Glu88 contributes to the CMP binding site. Glu88 is a N(7)-methyl-GMP binding site. Residues 156–157 and Lys205 each bind substrate; that span reads SA. Asp230 contacts Mg(2+). N6-acetyllysine is present on Lys256.

It belongs to the pyrimidine 5'-nucleotidase family. As to quaternary structure, monomer.

It is found in the cytoplasm. The enzyme catalyses N(7)-methyl-GMP + H2O = N(7)-methylguanosine + phosphate. It catalyses the reaction CMP + H2O = cytidine + phosphate. The catalysed reaction is a ribonucleoside 5'-phosphate + H2O = a ribonucleoside + phosphate. Functionally, specifically hydrolyzes 7-methylguanosine monophosphate (m(7)GMP) to 7-methylguanosine and inorganic phosphate. The specific activity for m(7)GMP may protect cells against undesired salvage of m(7)GMP and its incorporation into nucleic acids. Also has weak activity for CMP. UMP and purine nucleotides are poor substrates. The chain is 7-methylguanosine phosphate-specific 5'-nucleotidase (Nt5c3b) from Rattus norvegicus (Rat).